We begin with the raw amino-acid sequence, 273 residues long: MGKGGGCVPSKKKKPATTGDGPGIDDDNDATNAPIQIDDDQTTIDGDRTTATNTGGTTTPAITTTAAKISSPLKIFVVFYSMYGHVESLAKRMKKGVDSVEGVEATLYRVPETLSQEVVEQMKAPVKDLEIPEITAAELTAADGFLFGFPTRYGCMAAQMKAFFDSTGSLWKEQSLAGKPAGFFVSTGTQGGGQETTAWTAITQLVHHGMLFVPIGYTFGAGMFKMDSIRGGSPYGAGVFAGDGSREATETELALAEHQGNYMAAIVKRLAQP.

The tract at residues 1–60 (MGKGGGCVPSKKKKPATTGDGPGIDDDNDATNAPIQIDDDQTTIDGDRTTATNTGGTTTP) is disordered. The segment covering 49–60 (TTATNTGGTTTP) has biased composition (low complexity). The region spanning 75–263 (IFVVFYSMYG…ALAEHQGNYM (189 aa)) is the Flavodoxin-like domain. FMN contacts are provided by residues 81-85 (SMYGH), 183-236 (FFVS…SPYG), and His207. Tyr83 contacts NAD(+).

It belongs to the WrbA family. FMN serves as cofactor.

Its subcellular location is the cell membrane. It catalyses the reaction a quinone + NADH + H(+) = a quinol + NAD(+). It carries out the reaction a quinone + NADPH + H(+) = a quinol + NADP(+). In terms of biological role, catalyzes the transfer of electrons from NADH and NADPH to reduce quinone to the hydroquinone state. The polypeptide is Probable NAD(P)H dehydrogenase (quinone) FQR1-like 2 (Arabidopsis thaliana (Mouse-ear cress)).